The sequence spans 530 residues: Type 2 DNA topoisomerase 6 subunit B (530 aa).

Residues N42, D76, 97–98, 106–113, and K427 each bind ATP; these read SK and GMYGLGVK.

This sequence belongs to the TOP6B family. Homodimer. Heterotetramer of two Top6A and two Top6B chains.

The enzyme catalyses ATP-dependent breakage, passage and rejoining of double-stranded DNA.. Its function is as follows. Relaxes both positive and negative superturns and exhibits a strong decatenase activity. This chain is Type 2 DNA topoisomerase 6 subunit B, found in Saccharolobus islandicus (strain Y.N.15.51 / Yellowstone #2) (Sulfolobus islandicus).